Here is a 662-residue protein sequence, read N- to C-terminus: A-kinase anchor protein 10, mitochondrial (662 aa).

The transit peptide at 1 to 28 (MRGAGPSPRHSPRALRPDPGPAMSFFRR) directs the protein to the mitochondrion. Disordered stretches follow at residues 1-55 (MRGA…SPQK), 178-205 (KQSS…ALDR), and 242-280 (GHSA…NSCS). Basic and acidic residues predominate over residues 32 to 43 (GKEQEKTLDVKS). Serine 52 and serine 189 each carry phosphoserine. 2 RGS domains span residues 125-369 (TLEQ…CKYQ) and 379-505 (YLAD…YKYL). The segment covering 256–280 (GSHQIPTDSQDSSSRLAVGSRNSCS) has biased composition (polar residues). Serine 281 bears the Phosphoserine mark. The PKA-RII subunit binding stretch occupies residues 634–647 (LAWKIAKMIVSDVM).

In terms of tissue distribution, highly expressed in testis, kidney and lung, followed by brain, skeletal muscle, liver, spleen and heart. Also expressed in brown adipose tissue and pancreas.

The protein resides in the mitochondrion. It localises to the membrane. The protein localises to the cytoplasm. Differentially targeted protein that binds to type I and II regulatory subunits of protein kinase A and anchors them to the mitochondria or the plasma membrane. Although the physiological relevance between PKA and AKAPS with mitochondria is not fully understood, one idea is that BAD, a proapoptotic member, is phosphorylated and inactivated by mitochondria-anchored PKA. It cannot be excluded too that it may facilitate PKA as well as G protein signal transduction, by acting as an adapter for assembling multiprotein complexes. With its RGS domain, it could lead to the interaction to G-alpha proteins, providing a link between the signaling machinery and the downstream kinase. This chain is A-kinase anchor protein 10, mitochondrial (Akap10), found in Mus musculus (Mouse).